Reading from the N-terminus, the 307-residue chain is MNYLEFEVIWGVNNIYSILELNSKLIYEGIFKGKVLETGCKEYSPLVPGDIVLGYIYSSRKVYIDKRLSRKNILWRYNKKADLRQTIVSNIDNVLIVSSANFPEMKNFFIDRVLIVAEEQNIVPIIVINKIDKGISQKAQEFSEIYENLGYKVLKTSVKTYEGIKEVKEVLKNSRTSFIGQSGVGKSSLINLIDSRASQSVNEISHKYSRGKHTTVYSISFHSDSGIIVDTPGIKEFGIETLPFENLKYYFKEFENFASFCKYKSCLHVSEPYCSVTSSLDNGISKLRYESYLKILSELKNYKNYAR.

The 158-residue stretch at 80 to 237 (KADLRQTIVS…IVDTPGIKEF (158 aa)) folds into the CP-type G domain. Residues 129–132 (NKID) and 180–188 (GQSGVGKSS) each bind GTP. Residues Cys261, Cys266, His268, and Cys274 each coordinate Zn(2+).

It belongs to the TRAFAC class YlqF/YawG GTPase family. RsgA subfamily. Monomer. Associates with 30S ribosomal subunit, binds 16S rRNA. It depends on Zn(2+) as a cofactor.

The protein localises to the cytoplasm. Functionally, one of several proteins that assist in the late maturation steps of the functional core of the 30S ribosomal subunit. Helps release RbfA from mature subunits. May play a role in the assembly of ribosomal proteins into the subunit. Circularly permuted GTPase that catalyzes slow GTP hydrolysis, GTPase activity is stimulated by the 30S ribosomal subunit. The sequence is that of Small ribosomal subunit biogenesis GTPase RsgA from Borreliella burgdorferi (strain ATCC 35210 / DSM 4680 / CIP 102532 / B31) (Borrelia burgdorferi).